The sequence spans 577 residues: Cytochrome P450 714D1 (577 aa).

Over 1–3 (MES) the chain is Lumenal. A helical; Signal-anchor for type III membrane protein membrane pass occupies residues 4-24 (FFVFFTAAALPVVVAAAVIAG). The Cytoplasmic segment spans residues 25 to 577 (LCITAAWLAR…STAPVHSSHN (553 aa)). Residues 315-343 (REHGGKAAPPSPPERDFLGSIIENSGGQP) form a disordered region. Cys504 provides a ligand contact to heme.

This sequence belongs to the cytochrome P450 family. Heme serves as cofactor. In terms of tissue distribution, expressed in rapidly elongating or dividing tissues, including the shoot apical meristem, the intercalary meristem and elongating zones of internodes, and panicle but not in young seedlings, roots and leaves. During the heading stage, the highest expression is detected in the flowering spikelets, anthers, the divisional zone and the node of the uppermost internode.

Its subcellular location is the endoplasmic reticulum membrane. Catalyzes the 16alpha,17-epoxidation on non-13-hydroxylated gibberellins (GAs), including GA4, GA9, and GA12. No activity with GA1, GA20, GA53 or ent-kaurenoic acid. Reduces the biological activity of GAs. The chain is Cytochrome P450 714D1 (CYP714D1) from Oryza sativa subsp. japonica (Rice).